The chain runs to 440 residues: Phosphoglucosamine mutase (440 aa).

Catalysis depends on S97, which acts as the Phosphoserine intermediate. The Mg(2+) site is built by S97, D237, D239, and D241. The residue at position 97 (S97) is a Phosphoserine.

The protein belongs to the phosphohexose mutase family. It depends on Mg(2+) as a cofactor. Activated by phosphorylation.

The catalysed reaction is alpha-D-glucosamine 1-phosphate = D-glucosamine 6-phosphate. In terms of biological role, catalyzes the conversion of glucosamine-6-phosphate to glucosamine-1-phosphate. The chain is Phosphoglucosamine mutase from Nautilia profundicola (strain ATCC BAA-1463 / DSM 18972 / AmH).